We begin with the raw amino-acid sequence, 254 residues long: 3-deoxy-manno-octulosonate cytidylyltransferase (254 aa).

This sequence belongs to the KdsB family.

The protein resides in the cytoplasm. The catalysed reaction is 3-deoxy-alpha-D-manno-oct-2-ulosonate + CTP = CMP-3-deoxy-beta-D-manno-octulosonate + diphosphate. The protein operates within nucleotide-sugar biosynthesis; CMP-3-deoxy-D-manno-octulosonate biosynthesis; CMP-3-deoxy-D-manno-octulosonate from 3-deoxy-D-manno-octulosonate and CTP: step 1/1. It participates in bacterial outer membrane biogenesis; lipopolysaccharide biosynthesis. Functionally, activates KDO (a required 8-carbon sugar) for incorporation into bacterial lipopolysaccharide in Gram-negative bacteria. This is 3-deoxy-manno-octulosonate cytidylyltransferase from Chlamydia caviae (strain ATCC VR-813 / DSM 19441 / 03DC25 / GPIC) (Chlamydophila caviae).